The primary structure comprises 448 residues: tRNA-2-methylthio-N(6)-dimethylallyladenosine synthase (448 aa).

Residues 2–119 (KKLYIKTFGC…LSDLIAQRRK (118 aa)) form the MTTase N-terminal domain. [4Fe-4S] cluster contacts are provided by C11, C48, C82, C156, C160, and C163. Residues 142–375 (RQTRGSAYVS…LALIEGQSNQ (234 aa)) enclose the Radical SAM core domain. One can recognise a TRAM domain in the interval 378-444 (QKMLGKTERV…NYTLRGELVE (67 aa)).

Belongs to the methylthiotransferase family. MiaB subfamily. As to quaternary structure, monomer. The cofactor is [4Fe-4S] cluster.

It localises to the cytoplasm. It carries out the reaction N(6)-dimethylallyladenosine(37) in tRNA + (sulfur carrier)-SH + AH2 + 2 S-adenosyl-L-methionine = 2-methylsulfanyl-N(6)-dimethylallyladenosine(37) in tRNA + (sulfur carrier)-H + 5'-deoxyadenosine + L-methionine + A + S-adenosyl-L-homocysteine + 2 H(+). Catalyzes the methylthiolation of N6-(dimethylallyl)adenosine (i(6)A), leading to the formation of 2-methylthio-N6-(dimethylallyl)adenosine (ms(2)i(6)A) at position 37 in tRNAs that read codons beginning with uridine. The protein is tRNA-2-methylthio-N(6)-dimethylallyladenosine synthase of Polynucleobacter asymbioticus (strain DSM 18221 / CIP 109841 / QLW-P1DMWA-1) (Polynucleobacter necessarius subsp. asymbioticus).